The chain runs to 241 residues: MSASEGISLPGNEETTPPHEKHKQKAKKAKKKSRSAKESVPNAMDAKATASYFSLSIVGQIVSATFPLGPDKEFVFLRYEMVAGPDWQLSSGPQHGLTQLATNRRGHFNEPIVFNMPIEVTYKSTSPYGWPQILVTVFGRSGLGRETLLGYAHIHLPVFGSRRPADQTEQLQAPILMPKCPNMMADITSWLLRREPELKDPKVLLDNLKCKGLSMESYGSLQFQLSSVMRGARKLGYHWHS.

Residues 1 to 42 are disordered; that stretch reads MSASEGISLPGNEETTPPHEKHKQKAKKAKKKSRSAKESVPN. The segment covering 20-34 has biased composition (basic residues); sequence EKHKQKAKKAKKKSR. Positions 53–197 constitute a C2 B9-type domain; it reads FSLSIVGQIV…TSWLLRREPE (145 aa).

This sequence belongs to the B9D family. In terms of assembly, probable component of the tectonic-like complex (also named MKS complex), composed of B9d1, B9d2, Cc2d2a, Mks1 and tctn. Expressed in type I sensory neurons (at protein level). Expressed in spermatids and spermatocytes (at protein level).

It is found in the cytoplasm. The protein resides in the cytoskeleton. Its subcellular location is the cilium basal body. In terms of biological role, probable component of the tectonic-like complex (also named MKS complex), a complex localized at the transition zone of primary cilia. Required for ciliary structure and function. The chain is B9 domain-containing protein 1 from Drosophila melanogaster (Fruit fly).